A 398-amino-acid chain; its full sequence is cAMP-dependent protein kinase, catalytic subunit-like (398 aa).

Residues 90-344 enclose the Protein kinase domain; the sequence is LERIITIGKG…TQDVKDHKWF (255 aa). ATP is bound by residues 96–104 and lysine 119; that span reads IGKGTFGRV. The Proton acceptor role is filled by aspartate 213. The AGC-kinase C-terminal domain occupies 345–398; sequence EKVNWDDTLHLRVEPPIVPTLYHPGDTGNFDDYEEDTTGGPLCSQRDRDLFAEW.

Belongs to the protein kinase superfamily. Ser/Thr protein kinase family. cAMP subfamily.

The catalysed reaction is L-seryl-[protein] + ATP = O-phospho-L-seryl-[protein] + ADP + H(+). It catalyses the reaction L-threonyl-[protein] + ATP = O-phospho-L-threonyl-[protein] + ADP + H(+). The chain is cAMP-dependent protein kinase, catalytic subunit-like from Caenorhabditis elegans.